The following is a 113-amino-acid chain: Nucleoid-associated protein RHA1_ro04210 (113 aa).

The protein belongs to the YbaB/EbfC family. In terms of assembly, homodimer.

It is found in the cytoplasm. It localises to the nucleoid. Functionally, binds to DNA and alters its conformation. May be involved in regulation of gene expression, nucleoid organization and DNA protection. This is Nucleoid-associated protein RHA1_ro04210 from Rhodococcus jostii (strain RHA1).